The following is a 419-amino-acid chain: Serine hydroxymethyltransferase (419 aa).

(6S)-5,6,7,8-tetrahydrofolate-binding positions include L121 and 125–127 (GHL). K229 carries the N6-(pyridoxal phosphate)lysine modification.

The protein belongs to the SHMT family. In terms of assembly, homodimer. The cofactor is pyridoxal 5'-phosphate.

It is found in the cytoplasm. It catalyses the reaction (6R)-5,10-methylene-5,6,7,8-tetrahydrofolate + glycine + H2O = (6S)-5,6,7,8-tetrahydrofolate + L-serine. The protein operates within one-carbon metabolism; tetrahydrofolate interconversion. It participates in amino-acid biosynthesis; glycine biosynthesis; glycine from L-serine: step 1/1. In terms of biological role, catalyzes the reversible interconversion of serine and glycine with tetrahydrofolate (THF) serving as the one-carbon carrier. This reaction serves as the major source of one-carbon groups required for the biosynthesis of purines, thymidylate, methionine, and other important biomolecules. Also exhibits THF-independent aldolase activity toward beta-hydroxyamino acids, producing glycine and aldehydes, via a retro-aldol mechanism. In Histophilus somni (strain 2336) (Haemophilus somnus), this protein is Serine hydroxymethyltransferase.